The primary structure comprises 289 residues: Lipoyl synthase 1 (289 aa).

Residues C33, C38, C44, C59, C63, C66, and S274 each contribute to the [4Fe-4S] cluster site. In terms of domain architecture, Radical SAM core spans 45–263 (FAGGTATFLI…RIGEEELGFL (219 aa)).

It belongs to the radical SAM superfamily. Lipoyl synthase family. It depends on [4Fe-4S] cluster as a cofactor.

It localises to the cytoplasm. It catalyses the reaction [[Fe-S] cluster scaffold protein carrying a second [4Fe-4S](2+) cluster] + N(6)-octanoyl-L-lysyl-[protein] + 2 oxidized [2Fe-2S]-[ferredoxin] + 2 S-adenosyl-L-methionine + 4 H(+) = [[Fe-S] cluster scaffold protein] + N(6)-[(R)-dihydrolipoyl]-L-lysyl-[protein] + 4 Fe(3+) + 2 hydrogen sulfide + 2 5'-deoxyadenosine + 2 L-methionine + 2 reduced [2Fe-2S]-[ferredoxin]. It functions in the pathway protein modification; protein lipoylation via endogenous pathway; protein N(6)-(lipoyl)lysine from octanoyl-[acyl-carrier-protein]: step 2/2. Functionally, catalyzes the radical-mediated insertion of two sulfur atoms into the C-6 and C-8 positions of the octanoyl moiety bound to the lipoyl domains of lipoate-dependent enzymes, thereby converting the octanoylated domains into lipoylated derivatives. In Parasynechococcus marenigrum (strain WH8102), this protein is Lipoyl synthase 1.